A 475-amino-acid polypeptide reads, in one-letter code: Trifunctional enzyme subunit beta, mitochondrial (475 aa).

The transit peptide at 1–34 (MTTILTSTFRNLSTTSKWALRSSIRPLSCSSQLH) directs the protein to the mitochondrion. K53 bears the N6-succinyllysine mark. N6-acetyllysine; alternate is present on K73. K73 bears the N6-succinyllysine; alternate mark. The active-site Acyl-thioester intermediate is the C139. Residues 174-221 (IRHSRNMRKMMLDLNKAKTLGQRLSLLSKFRLNFLSPELPAVAEFSTN) lie within the membrane without spanning it. K189 carries the post-translational modification N6-acetyllysine; alternate. K189 carries the post-translational modification N6-succinyllysine; alternate. K191, K273, and K292 each carry N6-succinyllysine. K294 carries the N6-acetyllysine; alternate modification. The residue at position 294 (K294) is an N6-succinyllysine; alternate. K299 is subject to N6-acetyllysine. K333 carries the N6-acetyllysine; alternate modification. K333 is subject to N6-succinyllysine; alternate. N6-acetyllysine occurs at positions 349 and 362. The active-site Proton donor/acceptor is C459.

It belongs to the thiolase-like superfamily. Thiolase family. As to quaternary structure, heterotetramer of 2 alpha/HADHA and 2 beta/HADHB subunits; forms the mitochondrial trifunctional enzyme. Also purified as higher order heterooligomers including a 4 alpha/HADHA and 4 beta/HADHB heterooligomer which physiological significance remains unclear. The mitochondrial trifunctional enzyme interacts with MTLN. Interacts with RSAD2/viperin. Post-translationally, acetylation of Lys-202 is observed in liver mitochondria from fasted mice but not from fed mice.

It is found in the mitochondrion. Its subcellular location is the mitochondrion inner membrane. The protein localises to the mitochondrion outer membrane. It localises to the endoplasmic reticulum. It catalyses the reaction an acyl-CoA + acetyl-CoA = a 3-oxoacyl-CoA + CoA. It carries out the reaction butanoyl-CoA + acetyl-CoA = 3-oxohexanoyl-CoA + CoA. The catalysed reaction is hexanoyl-CoA + acetyl-CoA = 3-oxooctanoyl-CoA + CoA. The enzyme catalyses octanoyl-CoA + acetyl-CoA = 3-oxodecanoyl-CoA + CoA. It catalyses the reaction decanoyl-CoA + acetyl-CoA = 3-oxododecanoyl-CoA + CoA. It carries out the reaction dodecanoyl-CoA + acetyl-CoA = 3-oxotetradecanoyl-CoA + CoA. The catalysed reaction is tetradecanoyl-CoA + acetyl-CoA = 3-oxohexadecanoyl-CoA + CoA. The protein operates within lipid metabolism; fatty acid beta-oxidation. Its function is as follows. Mitochondrial trifunctional enzyme catalyzes the last three of the four reactions of the mitochondrial beta-oxidation pathway. The mitochondrial beta-oxidation pathway is the major energy-producing process in tissues and is performed through four consecutive reactions breaking down fatty acids into acetyl-CoA. Among the enzymes involved in this pathway, the trifunctional enzyme exhibits specificity for long-chain fatty acids. Mitochondrial trifunctional enzyme is a heterotetrameric complex composed of two proteins, the trifunctional enzyme subunit alpha/HADHA carries the 2,3-enoyl-CoA hydratase and the 3-hydroxyacyl-CoA dehydrogenase activities, while the trifunctional enzyme subunit beta/HADHB described here bears the 3-ketoacyl-CoA thiolase activity. This Mus musculus (Mouse) protein is Trifunctional enzyme subunit beta, mitochondrial (Hadhb).